A 73-amino-acid polypeptide reads, in one-letter code: MGSFSIWHWMIVLVIVLLVFGRGKIPELMGDMAKGIKSFKKGMADDDVADDKRTVEHRADETVSAVKEKASKS.

A helical transmembrane segment spans residues 1–21 (MGSFSIWHWMIVLVIVLLVFG).

The protein belongs to the TatA/E family. The Tat system comprises two distinct complexes: a TatABC complex, containing multiple copies of TatA, TatB and TatC subunits, and a separate TatA complex, containing only TatA subunits. Substrates initially bind to the TatABC complex, which probably triggers association of the separate TatA complex to form the active translocon.

Its subcellular location is the cell inner membrane. Functionally, part of the twin-arginine translocation (Tat) system that transports large folded proteins containing a characteristic twin-arginine motif in their signal peptide across membranes. TatA could form the protein-conducting channel of the Tat system. The protein is Sec-independent protein translocase protein TatA of Mesorhizobium japonicum (strain LMG 29417 / CECT 9101 / MAFF 303099) (Mesorhizobium loti (strain MAFF 303099)).